The following is a 1035-amino-acid chain: Cell-division control histidine kinase PdhS (1035 aa).

The segment at 1-613 (MSGSYPFIDI…HADGSEEPVD (613 aa)) is important for polar localization. The segment at 500-533 (QGLANTRAESETPVSETSSIEPVEPTPPVKTRSE) is disordered. An interaction with DivK region spans residues 614 to 1035 (AHLNAIAWRG…VFPPTRVLAD (422 aa)). A PAS domain is found at 659–730 (HVEELKTILD…YLHGLSGNGV (72 aa)). The region spanning 802-1031 (RISHEIRTPL…VVEIVFPPTR (230 aa)) is the Histidine kinase domain. His805 carries the phosphohistidine; by autocatalysis modification.

As to quaternary structure, interacts with DivK.

The protein localises to the cytoplasm. It catalyses the reaction ATP + protein L-histidine = ADP + protein N-phospho-L-histidine.. Functionally, functions as a polar differentiation marker. Essential protein that, by localizing in the old pole of dividing cells, controls cell division and maturation, probably through control of DivK phosphorylation status and cellular distribution, which in turn regulates CtrA, a transcriptional regulator of the minB operon. The asymmetrical localization of this protein is probably required for cells to enter a new division cycle. This is Cell-division control histidine kinase PdhS (pdhS) from Brucella canis (strain ATCC 23365 / NCTC 10854 / RM-666).